We begin with the raw amino-acid sequence, 375 residues long: Trichodiene synthase (375 aa).

This sequence belongs to the trichodiene synthase family.

The enzyme catalyses (2E,6E)-farnesyl diphosphate = trichodiene + diphosphate. It functions in the pathway sesquiterpene biosynthesis; trichothecene biosynthesis. In terms of biological role, TS is a member of the terpene cyclase group of enzymes. It catalyzes the isomerization and cyclization of farnesyl pyro-phosphate to form trichodiene, the first cyclic intermediate in the biosynthetic pathway for trichothecenes. It serves to branch trichothecene biosynthesis from the isoprenoid pathway. The polypeptide is Trichodiene synthase (TRI5) (Fusarium culmorum).